Here is a 1132-residue protein sequence, read N- to C-terminus: Sentrin-specific protease 6 (1132 aa).

Disordered regions lie at residues 23 to 51 and 327 to 388; these read SKRDGGFKNNWSFDHEEESEGDADKDGAN and LPGG…VPST. 5 positions are modified to phosphoserine: Ser41, Ser355, Ser356, Ser371, and Ser373. Thr436 carries the phosphothreonine modification. Lys648 participates in a covalent cross-link: Glycyl lysine isopeptide (Lys-Gly) (interchain with G-Cter in SUMO2). A protease region spans residues 686 to 1132; it reads ISVTNEDLHC…QYASASGGSE (447 aa). Catalysis depends on residues His785 and Asp936. Ser938 bears the Phosphoserine mark. The active site involves Cys1049. Ser1131 is subject to Phosphoserine.

It belongs to the peptidase C48 family. In terms of assembly, interacts with RXRA. Forms a complex with KAT5-TIP60 and UBE2I in response to UV irradiation. Interacts with RPA1 to maintain it in hyposumoylated state during S phase preventing DNA repair initiation.

The protein resides in the nucleus. It functions in the pathway protein modification; protein sumoylation. Functionally, protease that deconjugates SUMO1, SUMO2 and SUMO3 from targeted proteins. Processes preferentially poly-SUMO2 and poly-SUMO3 chains, but does not efficiently process SUMO1, SUMO2 and SUMO3 precursors. Deconjugates SUMO1 from RXRA, leading to transcriptional activation. Involved in chromosome alignment and spindle assembly, by regulating the kinetochore CENPH-CENPI-CENPK complex. Desumoylates PML and CENPI, protecting them from degradation by the ubiquitin ligase RNF4, which targets polysumoylated proteins for proteasomal degradation. Also desumoylates RPA1, thus preventing recruitment of RAD51 to the DNA damage foci to initiate DNA repair through homologous recombination. This Mus musculus (Mouse) protein is Sentrin-specific protease 6 (Senp6).